We begin with the raw amino-acid sequence, 105 residues long: Replication restart protein PriB (105 aa).

Residues 1–102 (MTTNRLVLSG…LHAEQIEFID (102 aa)) form the SSB domain.

The protein belongs to the PriB family. In terms of assembly, homodimer. Interacts with PriA and DnaT. Component of the replication restart primosome. Primosome assembly occurs via a 'hand-off' mechanism. PriA binds to replication forks, subsequently PriB then DnaT bind; DnaT then displaces ssDNA to generate the helicase loading substrate.

Its function is as follows. Involved in the restart of stalled replication forks, which reloads the replicative helicase on sites other than the origin of replication; the PriA-PriB pathway is the major replication restart pathway. During primosome assembly it facilitates complex formation between PriA and DnaT on DNA; stabilizes PriA on DNA. Stimulates the DNA unwinding activity of PriA helicase. The polypeptide is Replication restart protein PriB (Yersinia pseudotuberculosis serotype O:1b (strain IP 31758)).